The sequence spans 67 residues: Cold shock protein ScoF (67 aa).

The region spanning 4 to 64 is the CSD domain; the sequence is GTVKWFNSEK…GQKGPQAENI (61 aa).

Its subcellular location is the cytoplasm. This chain is Cold shock protein ScoF (scoF), found in Streptomyces coelicolor (strain ATCC BAA-471 / A3(2) / M145).